The following is a 372-amino-acid chain: tRNA-specific 2-thiouridylase MnmA (372 aa).

Residues 16–23 (GMSGGVDS) and methionine 42 contribute to the ATP site. An interaction with target base in tRNA region spans residues 102–104 (NPD). Cysteine 107 (nucleophile) is an active-site residue. Cysteine 107 and cysteine 205 are oxidised to a cystine. Glycine 132 serves as a coordination point for ATP. The tract at residues 155–157 (KDQ) is interaction with tRNA. The Cysteine persulfide intermediate role is filled by cysteine 205. An interaction with tRNA region spans residues 317–318 (RY).

This sequence belongs to the MnmA/TRMU family.

Its subcellular location is the cytoplasm. It carries out the reaction S-sulfanyl-L-cysteinyl-[protein] + uridine(34) in tRNA + AH2 + ATP = 2-thiouridine(34) in tRNA + L-cysteinyl-[protein] + A + AMP + diphosphate + H(+). Catalyzes the 2-thiolation of uridine at the wobble position (U34) of tRNA, leading to the formation of s(2)U34. This chain is tRNA-specific 2-thiouridylase MnmA, found in Shewanella putrefaciens (strain CN-32 / ATCC BAA-453).